Consider the following 338-residue polypeptide: Anthranilate phosphoribosyltransferase (338 aa).

5-phospho-alpha-D-ribose 1-diphosphate is bound by residues glycine 81, 84 to 85, threonine 89, 91 to 94, 109 to 117, and alanine 121; these read GD, NIST, and KHGNRNLSS. Glycine 81 lines the anthranilate pocket. Position 93 (serine 93) interacts with Mg(2+). Asparagine 112 lines the anthranilate pocket. Residue arginine 167 participates in anthranilate binding. Mg(2+)-binding residues include aspartate 226 and glutamate 227.

It belongs to the anthranilate phosphoribosyltransferase family. In terms of assembly, homodimer. The cofactor is Mg(2+).

The catalysed reaction is N-(5-phospho-beta-D-ribosyl)anthranilate + diphosphate = 5-phospho-alpha-D-ribose 1-diphosphate + anthranilate. The protein operates within amino-acid biosynthesis; L-tryptophan biosynthesis; L-tryptophan from chorismate: step 2/5. In terms of biological role, catalyzes the transfer of the phosphoribosyl group of 5-phosphorylribose-1-pyrophosphate (PRPP) to anthranilate to yield N-(5'-phosphoribosyl)-anthranilate (PRA). This is Anthranilate phosphoribosyltransferase from Cereibacter sphaeroides (strain ATCC 17025 / ATH 2.4.3) (Rhodobacter sphaeroides).